A 231-amino-acid polypeptide reads, in one-letter code: Eukaryotic translation initiation factor 4E allele Eva1 (231 aa).

Over residues 1–20 the composition is skewed to basic and acidic residues; it reads MAAAEMERTTSFDAAEKLKA. Residues 1 to 34 are disordered; that stretch reads MAAAEMERTTSFDAAEKLKAADAGGGEVDDELEE. EIF4G-binding stretches follow at residues 56 to 59 and 66 to 102; these read HPLE and FDNP…NNIH. MRNA-binding positions include 74–79, K106, and 124–125; these read RQIDWG and WE. The cysteines at positions 129 and 167 are disulfide-linked. Residues 150–159 are EIF4G-binding; sequence YTLLAMIGHQ. Residues 174 to 179 and 219 to 223 each bind mRNA; these read RVKGEK and KRLDR.

Belongs to the eukaryotic initiation factor 4E family. EIF4F is a multi-subunit complex, the composition of which varies with external and internal environmental conditions. It is composed of at least EIF4A, EIF4E and EIF4G. EIF4E is also known to interact with other partners. In higher plants two isoforms of EIF4F have been identified, named isoform EIF4F and isoform EIF(iso)4F. Isoform EIF4F has subunits p220 and p26, whereas isoform EIF(iso)4F has subunits p82 and p28. As to quaternary structure, (Microbial infection) Interacts with potyvirus viral genome-linked protein (VPg); this interaction is possible in susceptible hosts but impaired in resistant plants. In terms of processing, according to the redox status, the Cys-129-Cys-167 disulfide bridge may have a role in regulating protein function by affecting its ability to bind capped mRNA.

It localises to the nucleus. It is found in the cytoplasm. Functionally, component of the protein complex eIF4F, which is involved in the recognition of the mRNA cap, ATP-dependent unwinding of 5'-terminal secondary structure and recruitment of mRNA to the ribosome. Recognizes and binds the 7-methylguanosine-containing mRNA cap during an early step in the initiation of protein synthesis and facilitates ribosome binding by inducing the unwinding of the mRNAs secondary structures. Key component of recessive resistance to potyviruses. (Microbial infection) Susceptibility host factor required for viral infection (e.g. Potato virus Y (PVY)) by recruiting viral RNAs to the host ribosomal complex via an interaction with viral genome-linked protein (VPg). Displayed sequence is the allele Eva1 that confers resistance to potato virus Y (PVY) by failing to interact with the viral VPg protein. This is Eukaryotic translation initiation factor 4E allele Eva1 from Solanum etuberosum (Wild potato).